We begin with the raw amino-acid sequence, 83 residues long: MKTSMFLTLTGLGLLFVVCYASESEEKEFPKELLSSIFAADSDFKVEERGCLGDKCDYNNGCCSGYVCSRTWKWCVLAGPWRR.

Positions 1–21 (MKTSMFLTLTGLGLLFVVCYA) are cleaved as a signal peptide. The propeptide occupies 22-49 (SESEEKEFPKELLSSIFAADSDFKVEER). 3 disulfides stabilise this stretch: C51-C63, C56-C68, and C62-C75.

Belongs to the neurotoxin 10 (Hwtx-1) family. 51 (Hntx-8) subfamily. Hntx-8 sub-subfamily. In terms of tissue distribution, expressed by the venom gland.

The protein localises to the secreted. Its function is as follows. Agglutinates human and mice erythrocytes. This activity can be specifically inhibited by mannosamine. This lectin shows very low toxicity in both mammals and insects. In Cyriopagopus schmidti (Chinese bird spider), this protein is U5-theraphotoxin-Hs1a 1.